A 246-amino-acid polypeptide reads, in one-letter code: MSEIIYGIHAVKALLERDPQRFLEVFILKGRDDRRLQPLIAELEAAGLVIQVASRQWLDSQVEGGVHQGIVARVREGRQYQENDLPALLESVETPFLLVLDGVTDPHNLGACLRSADAAGVHAVIVPRDRSAQLNAIAKKVASGAAENVPLIKVTNLARTLRVLQEHNVWIVGTAGEADHTLYQSKMTGPMALVMGAEGEGMRRLTREHCDELISIPMAGSVSSLNVSVATGVCLFEVVRQRGLKA.

3 residues coordinate S-adenosyl-L-methionine: G196, I216, and L225.

The protein belongs to the class IV-like SAM-binding methyltransferase superfamily. RNA methyltransferase TrmH family. RlmB subfamily. Homodimer.

It is found in the cytoplasm. The enzyme catalyses guanosine(2251) in 23S rRNA + S-adenosyl-L-methionine = 2'-O-methylguanosine(2251) in 23S rRNA + S-adenosyl-L-homocysteine + H(+). Its function is as follows. Specifically methylates the ribose of guanosine 2251 in 23S rRNA. This is 23S rRNA (guanosine-2'-O-)-methyltransferase RlmB from Yersinia pestis.